The primary structure comprises 470 residues: Tert-butanol monooxygenase / tert-amyl alcohol desaturase oxygenase subunit (470 aa).

The Rieske domain occupies 51–155 (WQPVCLSQEL…AFERNGLVFA (105 aa)). Residues C91, H93, C110, and H113 each coordinate [2Fe-2S] cluster.

It belongs to the bacterial ring-hydroxylating dioxygenase alpha subunit family. This two-component enzyme is composed of an oxygenase (MdpJ) and a reductase (MdpK). It depends on [2Fe-2S] cluster as a cofactor.

It carries out the reaction tert-butanol + NADPH + O2 + H(+) = 2-methylpropane-1,2-diol + NADP(+) + H2O. The catalysed reaction is 2-methylbutan-2-ol + NADPH + O2 + H(+) = 3-hydroxy-3-methylbut-1-ene + NADP(+) + 2 H2O. Oxygenase component of a two-component system involved in the degradation of tertiary alcohols such as tert-butyl alcohol (TBA) and tert-amyl alcohol (TAA). In the presence of TBA, catalyzes the hydroxylation of TBA to 2-methylpropane-1,2-diol. In the presence of TAA, functions as a desaturase, enabling the degradation of TAA and resulting in the formation of the hemiterpene 3-hydroxy-3-methylbut-1-ene. The specificity of the catalysis depends strongly on the molecule structure of the substrate, allowing either hydroxylation or desaturation reactions. Also catalyzes the desaturation of the tertiary alcohol 3-methyl-3-pentanol (a C6 homolog of TBA and TAA) to 3-methyl-1-penten-3-ol, with lower efficiency. In addition, can transform some secondary alcohols, including the hydroxylation of 2-propanol to 1,2-propanediol, and the desaturation of 2-butanol, 3-methyl-2-butanol and 3-pentanol. This Aquincola tertiaricarbonis protein is Tert-butanol monooxygenase / tert-amyl alcohol desaturase oxygenase subunit.